Reading from the N-terminus, the 374-residue chain is Alcohol dehydrogenase class-3 (374 aa).

At A2 the chain carries N-acetylalanine. 7 residues coordinate Zn(2+): C45, H67, C97, C100, C103, C111, and C174. At K233 the chain carries N6-succinyllysine. S247 is subject to Phosphoserine. K315 carries the post-translational modification N6-succinyllysine. Phosphoserine is present on residues S324 and S351.

This sequence belongs to the zinc-containing alcohol dehydrogenase family. Class-III subfamily. Homodimer. It depends on Zn(2+) as a cofactor. In terms of tissue distribution, ubiquitous.

It is found in the cytoplasm. The catalysed reaction is a primary alcohol + NAD(+) = an aldehyde + NADH + H(+). The enzyme catalyses a secondary alcohol + NAD(+) = a ketone + NADH + H(+). It catalyses the reaction S-(hydroxymethyl)glutathione + NADP(+) = S-formylglutathione + NADPH + H(+). It carries out the reaction S-(hydroxymethyl)glutathione + NAD(+) = S-formylglutathione + NADH + H(+). The catalysed reaction is 20-oxo-(5Z,8Z,11Z,14Z)-eicosatetraenoate + NAD(+) + H2O = (5Z,8Z,11Z,14Z)-eicosatetraenedioate + NADH + 2 H(+). The enzyme catalyses 20-hydroxy-(5Z,8Z,11Z,14Z)-eicosatetraenoate + NAD(+) = 20-oxo-(5Z,8Z,11Z,14Z)-eicosatetraenoate + NADH + H(+). It catalyses the reaction S-nitrosoglutathione + NADH + H(+) = S-(hydroxysulfenamide)glutathione + NAD(+). Catalyzes the oxidation of long-chain primary alcohols and the oxidation of S-(hydroxymethyl) glutathione. Also oxidizes long chain omega-hydroxy fatty acids, such as 20-HETE, producing both the intermediate aldehyde, 20-oxoarachidonate and the end product, a dicarboxylic acid, (5Z,8Z,11Z,14Z)-eicosatetraenedioate. Class-III ADH is remarkably ineffective in oxidizing ethanol. Required for clearance of cellular formaldehyde, a cytotoxic and carcinogenic metabolite that induces DNA damage. Also acts as a S-nitroso-glutathione reductase by catalyzing the NADH-dependent reduction of S-nitrosoglutathione, thereby regulating protein S-nitrosylation. The sequence is that of Alcohol dehydrogenase class-3 from Mus musculus (Mouse).